The following is a 657-amino-acid chain: Keratinocyte proline-rich protein (657 aa).

Disordered regions lie at residues Gln-285–Arg-320, His-425–Glu-493, and Gln-517–Pro-568. The span at Thr-292 to Arg-302 shows a compositional bias: low complexity. A compositionally biased stretch (basic and acidic residues) spans Gln-434–Arg-444. Residue Ser-442 is modified to Phosphoserine. Pro residues-rich tracts occupy residues Val-449–Glu-493, Gln-517–Pro-530, and Gly-539–Ser-561.

The protein localises to the cytoplasm. The chain is Keratinocyte proline-rich protein from Mus musculus (Mouse).